We begin with the raw amino-acid sequence, 427 residues long: 5-hydroxybenzimidazole synthase BzaB (427 aa).

It belongs to the ThiC family. 5-hydroxybenzimidazole synthase subfamily. Requires [4Fe-4S] cluster as cofactor.

It catalyses the reaction 5-amino-1-(5-phospho-beta-D-ribosyl)imidazole + AH2 + S-adenosyl-L-methionine = 5-hydroxybenzimidazole + 5'-deoxyadenosine + formate + L-methionine + A + NH4(+) + phosphate + 2 H(+). It participates in cofactor biosynthesis; adenosylcobalamin biosynthesis. Together with BzaA, catalyzes the conversion of aminoimidazole ribotide (AIR) to 5-hydroxybenzimidazole (5-HBI) in a radical S-adenosyl-L-methionine (SAM)-dependent reaction. Is thus involved in the anaerobic biosynthesis of dimethylbenzimidazole (DMB), the lower axial ligand of vitamin B12 (cobalamin). Requires BzaA for catalytic activity, as BzaB alone displays no activity. This chain is 5-hydroxybenzimidazole synthase BzaB, found in Eubacterium limosum.